A 382-amino-acid chain; its full sequence is Apolipoprotein A-IV (382 aa).

The first 20 residues, 1–20, serve as a signal peptide directing secretion; that stretch reads MFLRAVVLTLALVAVTGARA. 13 tandem repeats follow at residues 33 to 54, 60 to 81, 82 to 103, 115 to 136, 137 to 158, 159 to 180, 181 to 202, 203 to 224, 225 to 246, 247 to 268, 269 to 286, 287 to 308, and 309 to 330. Residues 33-330 form a 13 X 22 AA approximate tandem repeats region; it reads DYFSQLSNNA…QVEELRQKLG (298 aa). The interval 362–382 is disordered; that stretch reads ENQDMPLALPEQEQAPGPLES.

Belongs to the apolipoprotein A1/A4/E family. In terms of assembly, homodimer.

The protein resides in the secreted. May have a role in chylomicrons and VLDL secretion and catabolism. Required for efficient activation of lipoprotein lipase by ApoC-II; potent activator of LCAT. Apoa-IV is a major component of HDL and chylomicrons. The sequence is that of Apolipoprotein A-IV (APOA4) from Acinonyx jubatus (Cheetah).